A 589-amino-acid polypeptide reads, in one-letter code: Inactive poly [ADP-ribose] polymerase RCD1 (589 aa).

Positions 64-153 (KLSAYENRSG…ETGAKTPLAW (90 aa)) constitute a WWE domain. The 222-residue stretch at 248–469 (EAAVSKWDET…LIAKRDNSGV (222 aa)) folds into the PARP catalytic domain. 2 disordered regions span residues 464-504 (RDNS…TRPK) and 569-589 (QPKS…AGGL). A compositionally biased stretch (polar residues) spans 481–503 (LESNQGARGSGSANSVGSSTTRP). Residues 501 to 572 (TRPKSPWMPF…ITTLQNQPKS (72 aa)) form the RST domain. Positions 571 to 589 (KSKEIPGSIRDHEEGAGGL) are enriched in basic and acidic residues.

Interacts with the transcription factors NAC013/NTL1 and NAC046. Interacts with dehydration-responsive DREB2 proteins and a number of transcription factors belonging to several protein families. Interacts with turnip crinkle virus (TCV) movement protein P8. As to expression, expressed in young developing tissues, such as young leaves and flowers and root tips. In mature plants, expressed in vasculature of leaves and roots, and guard cells.

The protein resides in the nucleus matrix. In terms of biological role, inactive ADP-ribosyltransferase that functions with SRO1 to regulate oxidative stress, hormonal and developmental responses. Required for embryogenesis, vegetative and reproductive development, and abiotic stress responses. May regulate several stress-responsive genes. Seems to play a larger developmental role than SRO1. Does not bind NAD in vitro. The sequence is that of Inactive poly [ADP-ribose] polymerase RCD1 (RCD1) from Arabidopsis thaliana (Mouse-ear cress).